Consider the following 603-residue polypeptide: uncharacterized protein (603 aa).

Positions 496 to 513 are enriched in acidic residues; sequence EEEDQEEDDTSDDDDQEK. Disordered regions lie at residues 496 to 536 and 549 to 568; these read EEED…GSLE and AVAE…DTAQ. Polar residues predominate over residues 517 to 533; it reads NPQNNIGSLTRTPSSPG.

It belongs to the herpesviridae US22 family.

This is an uncharacterized protein from Human cytomegalovirus (strain AD169) (HHV-5).